We begin with the raw amino-acid sequence, 86 residues long: Muscarinic toxin-like protein (86 aa).

The N-terminal stretch at 1–21 (MKTLLLTLAVVTMVCMDLGYT) is a signal peptide. 4 disulfides stabilise this stretch: Cys-24-Cys-45, Cys-38-Cys-62, Cys-66-Cys-78, and Cys-79-Cys-84.

This sequence belongs to the three-finger toxin family. Short-chain subfamily. Orphan group VIII (haditoxin) sub-subfamily. Homodimer; non-covalently linked. Expressed by the venom gland.

It localises to the secreted. Its function is as follows. Antagonist of muscle and neuronal nicotinic acetylcholine receptors (nAChR) with highest affinity for neuronal alpha-7/CHRNA7 nAChRs. This is Muscarinic toxin-like protein from Bungarus multicinctus (Many-banded krait).